The chain runs to 105 residues: Iron-sulfur cluster assembly protein CyaY (105 aa).

The protein belongs to the frataxin family.

Involved in iron-sulfur (Fe-S) cluster assembly. May act as a regulator of Fe-S biogenesis. The protein is Iron-sulfur cluster assembly protein CyaY of Dechloromonas aromatica (strain RCB).